We begin with the raw amino-acid sequence, 97 residues long: MAHHNGPRKKTRYKFKKDLRKRGIPPVTSVIQSFEIGQRVHVVVEPSVQKGMPHRRFHGKTGTVIGQRGRAWLLEVRDGDSVKQVIARPQHLKAQKV.

This sequence belongs to the eukaryotic ribosomal protein eL21 family.

This is Large ribosomal subunit protein eL21 from Methanoculleus marisnigri (strain ATCC 35101 / DSM 1498 / JR1).